We begin with the raw amino-acid sequence, 170 residues long: Lipoprotein signal peptidase (170 aa).

3 helical membrane-spanning segments follow: residues 9–29 (FNIF…KYLV), 72–92 (IFFL…SLKE), and 96–118 (IARI…RLFR). Catalysis depends on residues Asp-124 and Asp-146. Residues 143-163 (NFADSYVVIGMILFLVYDFFI) traverse the membrane as a helical segment.

It belongs to the peptidase A8 family.

The protein resides in the cell inner membrane. It carries out the reaction Release of signal peptides from bacterial membrane prolipoproteins. Hydrolyzes -Xaa-Yaa-Zaa-|-(S,diacylglyceryl)Cys-, in which Xaa is hydrophobic (preferably Leu), and Yaa (Ala or Ser) and Zaa (Gly or Ala) have small, neutral side chains.. The protein operates within protein modification; lipoprotein biosynthesis (signal peptide cleavage). This protein specifically catalyzes the removal of signal peptides from prolipoproteins. The chain is Lipoprotein signal peptidase from Borreliella afzelii (strain PKo) (Borrelia afzelii).